Consider the following 496-residue polypeptide: Probable ATP-dependent DNA helicase RecS (496 aa).

Positions I25–V192 constitute a Helicase ATP-binding domain. Residue L38 to S45 coordinates ATP. The short motif at D136–H139 is the DEAH box element. The region spanning R219–E363 is the Helicase C-terminal domain.

The protein belongs to the helicase family. RecQ subfamily. In terms of assembly, interacts with SSB (ssbA) and YpbB.

Its subcellular location is the cytoplasm. The protein resides in the nucleoid. The enzyme catalyses Couples ATP hydrolysis with the unwinding of duplex DNA by translocating in the 3'-5' direction.. It catalyses the reaction ATP + H2O = ADP + phosphate + H(+). Functionally, probable 3'-5' DNA helicase. Required in synaptic and/or post-synaptic stages of recombination. Probably has an overlapping function with RecQ. It probably acts to help generate ss-DNA from ds-DNA breaks. This Bacillus subtilis (strain 168) protein is Probable ATP-dependent DNA helicase RecS.